A 171-amino-acid polypeptide reads, in one-letter code: 3-hydroxydecanoyl-[acyl-carrier-protein] dehydratase (171 aa).

H70 is a catalytic residue.

It belongs to the thioester dehydratase family. FabA subfamily. In terms of assembly, homodimer.

The protein localises to the cytoplasm. The catalysed reaction is a (3R)-hydroxyacyl-[ACP] = a (2E)-enoyl-[ACP] + H2O. It catalyses the reaction (3R)-hydroxydecanoyl-[ACP] = (2E)-decenoyl-[ACP] + H2O. It carries out the reaction (2E)-decenoyl-[ACP] = (3Z)-decenoyl-[ACP]. It functions in the pathway lipid metabolism; fatty acid biosynthesis. In terms of biological role, necessary for the introduction of cis unsaturation into fatty acids. Catalyzes the dehydration of (3R)-3-hydroxydecanoyl-ACP to E-(2)-decenoyl-ACP and then its isomerization to Z-(3)-decenoyl-ACP. Can catalyze the dehydratase reaction for beta-hydroxyacyl-ACPs with saturated chain lengths up to 16:0, being most active on intermediate chain length. This is 3-hydroxydecanoyl-[acyl-carrier-protein] dehydratase from Shewanella sp. (strain ANA-3).